Reading from the N-terminus, the 323-residue chain is MKKKTGYSPYPPAIFLMGPTASGKSALALHIARYLPVEIISVDSAQVYRHMNIGTAKPGPEALAATPHHLIDLIDPHEHYSAARFRTDALRTMREIADRGSIPLLAGGTMLYFKTLLEGLSELPSADSDVRAAIEAKARKSGWPAMHQELFRLDSVSAERIKPTDSQRIQRALEVFYLTGKPMSETLRKPKNVSLPYEVVKIALVPGNRQALHQRIACRFEQMLKHGLIDEVRAIRDKFYLSDENPSMRCVGYRQVWMHLENATDALRMREMALAATRQLAKRQLTWLRSMKETREFDCLQENLPEQVKTYLLNTGLKFTEVS.

18-25 (GPTASGKS) contacts ATP. 20 to 25 (TASGKS) is a substrate binding site. Interaction with substrate tRNA regions lie at residues 43–46 (DSAQ), 167–171 (QRIQR), and 249–254 (RCVGYR).

Belongs to the IPP transferase family. Monomer. The cofactor is Mg(2+).

It catalyses the reaction adenosine(37) in tRNA + dimethylallyl diphosphate = N(6)-dimethylallyladenosine(37) in tRNA + diphosphate. Catalyzes the transfer of a dimethylallyl group onto the adenine at position 37 in tRNAs that read codons beginning with uridine, leading to the formation of N6-(dimethylallyl)adenosine (i(6)A). The sequence is that of tRNA dimethylallyltransferase from Nitrosospira multiformis (strain ATCC 25196 / NCIMB 11849 / C 71).